Consider the following 449-residue polypeptide: Elongation factor 1-alpha (449 aa).

The tr-type G domain maps to 5-230 (KVHMNLVVVG…DMLEPPVRPS (226 aa)). Positions 14–21 (GHVDAGKS) are G1. 14-21 (GHVDAGKS) is a GTP binding site. The G2 stretch occupies residues 70-74 (GITID). Positions 91-94 (DAPG) are G3. GTP contacts are provided by residues 91–95 (DAPGH) and 153–156 (NKMD). The segment at 153–156 (NKMD) is G4. Residues 194–196 (SGW) form a G5 region. The residue at position 362 (glutamate 362) is a 5-glutamyl glycerylphosphorylethanolamine.

Belongs to the TRAFAC class translation factor GTPase superfamily. Classic translation factor GTPase family. EF-Tu/EF-1A subfamily. Post-translationally, phosphatidylethanolamine (PE) is a direct precursor of the ethanolamine-phosphoglycerol (EPG) moiety.

It is found in the cytoplasm. In terms of biological role, this protein promotes the GTP-dependent binding of aminoacyl-tRNA to the A-site of ribosomes during protein biosynthesis. This chain is Elongation factor 1-alpha (TEF1), found in Trypanosoma brucei brucei.